The following is a 205-amino-acid chain: Large ribosomal subunit protein bL17c (205 aa).

The transit peptide at 1 to 89 directs the protein to the chloroplast; sequence MASASTTWSM…VIDNGGRVFA (89 aa).

Belongs to the bacterial ribosomal protein bL17 family. As to quaternary structure, part of the 50S ribosomal subunit.

Its subcellular location is the plastid. It localises to the chloroplast. In terms of biological role, this protein binds directly to 23S ribosomal RNA. The polypeptide is Large ribosomal subunit protein bL17c (RPL17) (Nicotiana tabacum (Common tobacco)).